Reading from the N-terminus, the 147-residue chain is 3-hydroxyacyl-[acyl-carrier-protein] dehydratase FabZ (147 aa).

Residue H51 is part of the active site.

Belongs to the thioester dehydratase family. FabZ subfamily.

The protein resides in the cytoplasm. The enzyme catalyses a (3R)-hydroxyacyl-[ACP] = a (2E)-enoyl-[ACP] + H2O. In terms of biological role, involved in unsaturated fatty acids biosynthesis. Catalyzes the dehydration of short chain beta-hydroxyacyl-ACPs and long chain saturated and unsaturated beta-hydroxyacyl-ACPs. This chain is 3-hydroxyacyl-[acyl-carrier-protein] dehydratase FabZ, found in Anaplasma marginale (strain Florida).